A 320-amino-acid chain; its full sequence is Cytochrome c biogenesis protein CcsA (320 aa).

The next 7 membrane-spanning stretches (helical) occupy residues 13-33, 46-66, 73-93, 147-167, 226-246, 259-274, and 289-309; these read ISFS…FLLV, GMIV…IYSG, LYES…VSYL, MVLG…LLVI, IISL…VWAN, ETWA…IYFH, and VASM…LLGI.

The protein belongs to the CcmF/CycK/Ccl1/NrfE/CcsA family. As to quaternary structure, may interact with Ccs1.

Its subcellular location is the plastid. The protein localises to the chloroplast thylakoid membrane. Functionally, required during biogenesis of c-type cytochromes (cytochrome c6 and cytochrome f) at the step of heme attachment. In Gossypium barbadense (Sea Island cotton), this protein is Cytochrome c biogenesis protein CcsA.